We begin with the raw amino-acid sequence, 193 residues long: uncharacterized protein (193 aa).

A helical transmembrane segment spans residues 119-143 (LAGSLLAATGMTLGIFGMGITGTCW).

Its subcellular location is the mitochondrion membrane. This is an uncharacterized protein from Saccharomyces cerevisiae (strain ATCC 204508 / S288c) (Baker's yeast).